A 176-amino-acid chain; its full sequence is ATP synthase subunit delta (176 aa).

The protein belongs to the ATPase delta chain family. As to quaternary structure, F-type ATPases have 2 components, F(1) - the catalytic core - and F(0) - the membrane proton channel. F(1) has five subunits: alpha(3), beta(3), gamma(1), delta(1), epsilon(1). F(0) has three main subunits: a(1), b(2) and c(10-14). The alpha and beta chains form an alternating ring which encloses part of the gamma chain. F(1) is attached to F(0) by a central stalk formed by the gamma and epsilon chains, while a peripheral stalk is formed by the delta and b chains.

It is found in the cell inner membrane. F(1)F(0) ATP synthase produces ATP from ADP in the presence of a proton or sodium gradient. F-type ATPases consist of two structural domains, F(1) containing the extramembraneous catalytic core and F(0) containing the membrane proton channel, linked together by a central stalk and a peripheral stalk. During catalysis, ATP synthesis in the catalytic domain of F(1) is coupled via a rotary mechanism of the central stalk subunits to proton translocation. Functionally, this protein is part of the stalk that links CF(0) to CF(1). It either transmits conformational changes from CF(0) to CF(1) or is implicated in proton conduction. This is ATP synthase subunit delta from Actinobacillus succinogenes (strain ATCC 55618 / DSM 22257 / CCUG 43843 / 130Z).